Consider the following 322-residue polypeptide: UDP-N-acetylenolpyruvoylglucosamine reductase (322 aa).

The FAD-binding PCMH-type domain maps to 36-202 (RAGGPAQVLF…TSVLFEGVPG (167 aa)). Arg-182 is a catalytic residue. Ser-231 (proton donor) is an active-site residue. Residue Glu-301 is part of the active site.

This sequence belongs to the MurB family. FAD serves as cofactor.

It is found in the cytoplasm. The enzyme catalyses UDP-N-acetyl-alpha-D-muramate + NADP(+) = UDP-N-acetyl-3-O-(1-carboxyvinyl)-alpha-D-glucosamine + NADPH + H(+). Its pathway is cell wall biogenesis; peptidoglycan biosynthesis. In terms of biological role, cell wall formation. In Brucella suis biovar 1 (strain 1330), this protein is UDP-N-acetylenolpyruvoylglucosamine reductase.